The following is a 481-amino-acid chain: Autolysin (481 aa).

The Peptidase C51 domain occupies 7–142; that stretch reads KNEFIERLKT…LQDDNMLMIS (136 aa). An N-acetylmuramoyl-L-alanine amidase domain is found at 198 to 323; it reads SNPKGIVIHN…NEFTSTSCPH (126 aa). Positions 398-466 constitute an SH3b domain; sequence EESARFTNGN…YLPIRTWNGS (69 aa).

This sequence belongs to the N-acetylmuramoyl-L-alanine amidase 2 family.

The protein localises to the secreted. The enzyme catalyses Hydrolyzes the link between N-acetylmuramoyl residues and L-amino acid residues in certain cell-wall glycopeptides.. Functionally, autolysins are involved in some important biological processes such as cell separation, cell-wall turnover, competence for genetic transformation, formation of the flagella and sporulation. Autolysin strictly depends on the presence of choline-containing cell walls for activity. The protein is Autolysin (lytA) of Staphylococcus aureus.